The chain runs to 2153 residues: RNA-directed RNA polymerase L (2153 aa).

Positions 36, 54, 97, 110, and 111 each coordinate Mn(2+). Lys-124 (for endonuclease activity) is an active-site residue. A RdRp catalytic domain is found at 957-1143 (TGKSIKFKRK…AINQEMWKSM (187 aa)). A Mg(2+)-binding site is contributed by Asp-1100.

Belongs to the Bunyavirales RNA polymerase family. In terms of assembly, interacts with the viral nucleoprotein. Mn(2+) is required as a cofactor. The cofactor is Mg(2+).

It is found in the host cytoplasm. The protein localises to the host perinuclear region. It carries out the reaction RNA(n) + a ribonucleoside 5'-triphosphate = RNA(n+1) + diphosphate. In terms of biological role, RNA-dependent RNA polymerase, which is responsible for the replication and transcription of the viral RNA genome using antigenomic RNA as an intermediate. During transcription, synthesizes subgenomic RNAs and assures their capping by a cap-snatching mechanism, which involves the endonuclease activity cleaving the host capped pre-mRNAs. These short capped RNAs are then used as primers for viral transcription. Cleaves ssRNA substrates but not DNA. Seems to downregulate the expression of its own and heterologous mRNAs through its endonuclease activity. The protein is RNA-directed RNA polymerase L of Abrothrix longipilis (Long-haired grass mouse).